The chain runs to 275 residues: Arylamine N-acetyltransferase (275 aa).

Cys-70 functions as the Acyl-thioester intermediate in the catalytic mechanism. Residues His-110 and Asp-127 contribute to the active site.

It belongs to the arylamine N-acetyltransferase family. As to quaternary structure, homodimer and homotetramer.

It catalyses the reaction an arylamine + acetyl-CoA = an N-acetylarylamine + CoA. Functionally, catalyzes the transfer of the acetyl group from acetyl coenzyme A to the free amino group of arylamines and hydrazines. Substrates include isoniazid, anisidine, and 4-aminoveratrole, and to a much lesser extent, p-aminobenzoic acid. This chain is Arylamine N-acetyltransferase, found in Mycolicibacterium smegmatis (Mycobacterium smegmatis).